We begin with the raw amino-acid sequence, 320 residues long: Ferrochelatase (320 aa).

Fe cation is bound by residues H194 and E275.

Belongs to the ferrochelatase family. As to quaternary structure, monomer.

The protein resides in the cytoplasm. The catalysed reaction is heme b + 2 H(+) = protoporphyrin IX + Fe(2+). Its pathway is porphyrin-containing compound metabolism; protoheme biosynthesis; protoheme from protoporphyrin-IX: step 1/1. In terms of biological role, catalyzes the ferrous insertion into protoporphyrin IX. The chain is Ferrochelatase from Escherichia coli (strain K12 / MC4100 / BW2952).